Reading from the N-terminus, the 154-residue chain is Acidic phospholipase A2 2 (154 aa).

An N-terminal signal peptide occupies residues 1 to 19 (MHPAHLLVPLGVCVSLLGA). The propeptide occupies 20–27 (ARIPPLPL). Intrachain disulfides connect Cys-38/Cys-104, Cys-54/Cys-153, Cys-56/Cys-72, Cys-71/Cys-132, Cys-78/Cys-125, Cys-88/Cys-118, and Cys-111/Cys-123. 3 residues coordinate Ca(2+): Tyr-55, Gly-57, and Gly-59. His-75 is an active-site residue. Asp-76 lines the Ca(2+) pocket. Asp-126 is an active-site residue.

It belongs to the phospholipase A2 family. Group I subfamily. D49 sub-subfamily. In terms of assembly, monomer. It depends on Ca(2+) as a cofactor. As to expression, expressed by the venom gland.

Its subcellular location is the secreted. The catalysed reaction is a 1,2-diacyl-sn-glycero-3-phosphocholine + H2O = a 1-acyl-sn-glycero-3-phosphocholine + a fatty acid + H(+). Snake venom phospholipase A2 (PLA2) that shows moderate enzymatic activity and exhibits procoagulant activity. PLA2 catalyzes the calcium-dependent hydrolysis of the 2-acyl groups in 3-sn-phosphoglycerides. This is Acidic phospholipase A2 2 from Pseudonaja textilis (Eastern brown snake).